Here is a 396-residue protein sequence, read N- to C-terminus: Cytochrome b (396 aa).

A run of 4 helical transmembrane segments spans residues 37–57 (FGSL…ILAM), 81–102 (WLMR…YAHI), 117–137 (WNVG…GYVL), and 182–202 (FFTF…IHIM). Histidine 87 and histidine 101 together coordinate heme b. Residues histidine 186 and histidine 200 each coordinate heme b. Residue histidine 205 coordinates a ubiquinone. Transmembrane regions (helical) follow at residues 230–250 (FKDI…SLLP), 292–312 (LGGV…PFTH), 324–344 (LAQV…WLGG), and 351–371 (FILM…LIFP).

The protein belongs to the cytochrome b family. As to quaternary structure, the cytochrome bc1 complex contains 3 respiratory subunits (MT-CYB, CYC1 and UQCRFS1), 2 core proteins (UQCRC1 and UQCRC2) and probably 6 low-molecular weight proteins. Heme b is required as a cofactor.

Its subcellular location is the mitochondrion inner membrane. Its function is as follows. Component of the ubiquinol-cytochrome c reductase complex (complex III or cytochrome b-c1 complex) that is part of the mitochondrial respiratory chain. The b-c1 complex mediates electron transfer from ubiquinol to cytochrome c. Contributes to the generation of a proton gradient across the mitochondrial membrane that is then used for ATP synthesis. This Lampetra fluviatilis (European river lamprey) protein is Cytochrome b (mt-cyb).